A 539-amino-acid chain; its full sequence is CTP synthase (539 aa).

Residues 1–268 are amidoligase domain; the sequence is MSFKSIFLTG…SDFLLNKLGF (268 aa). Serine 14 is a binding site for CTP. Serine 14 lines the UTP pocket. ATP is bound at residue 15-20; it reads SLGKGL. Tyrosine 55 provides a ligand contact to L-glutamine. Aspartate 72 is a binding site for ATP. The Mg(2+) site is built by aspartate 72 and glutamate 142. Residues 149–151, 188–193, and lysine 224 contribute to the CTP site; these read DIE and KTKPTQ. UTP contacts are provided by residues 188–193 and lysine 224; that span reads KTKPTQ. In terms of domain architecture, Glutamine amidotransferase type-1 spans 294–532; the sequence is RIGLVGKYLE…IRAAKAYSLE (239 aa). Position 353 (glycine 353) interacts with L-glutamine. Cysteine 380 (nucleophile; for glutamine hydrolysis) is an active-site residue. L-glutamine is bound by residues 381–384, glutamate 404, and arginine 460; that span reads LGMQ. Catalysis depends on residues histidine 505 and glutamate 507.

This sequence belongs to the CTP synthase family. Homotetramer.

It carries out the reaction UTP + L-glutamine + ATP + H2O = CTP + L-glutamate + ADP + phosphate + 2 H(+). The enzyme catalyses L-glutamine + H2O = L-glutamate + NH4(+). It catalyses the reaction UTP + NH4(+) + ATP = CTP + ADP + phosphate + 2 H(+). It participates in pyrimidine metabolism; CTP biosynthesis via de novo pathway; CTP from UDP: step 2/2. Allosterically activated by GTP, when glutamine is the substrate; GTP has no effect on the reaction when ammonia is the substrate. The allosteric effector GTP functions by stabilizing the protein conformation that binds the tetrahedral intermediate(s) formed during glutamine hydrolysis. Inhibited by the product CTP, via allosteric rather than competitive inhibition. Catalyzes the ATP-dependent amination of UTP to CTP with either L-glutamine or ammonia as the source of nitrogen. Regulates intracellular CTP levels through interactions with the four ribonucleotide triphosphates. The protein is CTP synthase of Chlamydia trachomatis serovar A (strain ATCC VR-571B / DSM 19440 / HAR-13).